The following is a 182-amino-acid chain: MQFNIPTLLTLFRVILIPFFVLVFYLPVTWSPFAAALIFCVAAVTDWFDGFLARRWNQSTRFGAFLDPVADKVLVAIAMVLVTEHYHSWWVTLPAATMIAREIIISALREWMAELGKRSSVAVSWIGKVKTTAQMVALAWLLWRPNIWVEYAGIALFFVAAVLTLWSMLQYLSAARADLLDQ.

The Cytoplasmic segment spans residues 2-12; the sequence is QFNIPTLLTLF. The helical transmembrane segment at 13-37 threads the bilayer; it reads RVILIPFFVLVFYLPVTWSPFAAAL. Residues 38–60 lie on the Periplasmic side of the membrane; the sequence is IFCVAAVTDWFDGFLARRWNQST. Residues 61–81 traverse the membrane as a helical segment; that stretch reads RFGAFLDPVADKVLVAIAMVL. At 82 to 86 the chain is on the cytoplasmic side; that stretch reads VTEHY. Residues 87–107 traverse the membrane as a helical segment; sequence HSWWVTLPAATMIAREIIISA. Topologically, residues 108-145 are periplasmic; that stretch reads LREWMAELGKRSSVAVSWIGKVKTTAQMVALAWLLWRP. The chain crosses the membrane as a helical span at residues 146–168; that stretch reads NIWVEYAGIALFFVAAVLTLWSM. Residues 169 to 181 are Cytoplasmic-facing; the sequence is LQYLSAARADLLD.

Belongs to the CDP-alcohol phosphatidyltransferase class-I family.

It is found in the cell inner membrane. The catalysed reaction is a CDP-1,2-diacyl-sn-glycerol + sn-glycerol 3-phosphate = a 1,2-diacyl-sn-glycero-3-phospho-(1'-sn-glycero-3'-phosphate) + CMP + H(+). The protein operates within phospholipid metabolism; phosphatidylglycerol biosynthesis; phosphatidylglycerol from CDP-diacylglycerol: step 1/2. In terms of biological role, catalyzes the conversion of cytidine diphosphate diacylglycerol (CDP-DG) and glycerol 3-phosphate into phosphatidylglycerol. Essential for the synthesis of anionic phospholipids, thereby playing a role in balancing the ratio of zwitterionic and anionic phospholipids, which is thought to be important for normal membrane function. This Shigella sonnei (strain Ss046) protein is CDP-diacylglycerol--glycerol-3-phosphate 3-phosphatidyltransferase.